A 578-amino-acid chain; its full sequence is MGNAIREKTIHGIAASSGIAIAKAYRLETPDLAAEKRAVADVEAEVARFEAAVAKAKEELEAIKQHALEKLGEDKAAIFAAHLLVLDDPELLNPIKEKIQTERVNAEYSLDETASFFISMFEAMDNEYMKERAADIRDVTKRVLAHLLGVTISNPSLISEEVVIIAEDLTPSDTAQLNRQYVKGFATDIGGRTSHSAIMARSLEIPAVVGTKTVTAEVKNGDIVIVDGLDGQVIINPSPELLAQYEQKRARYEAQKAEWAKLVHEATVTADGIHVELAANIGTPDDVKGALANGAEGIGLYRTEFLYMGRSELPTEDEQFVAYKTVLEQMNGKPVVVRTLDIGGDKELPYLQLPKEMNPFLGFRAIRLCLEMQDMFRTQLRALLRASVYGNLKIMFPMIATLDEFRQAKAILLEEKEALLRQGVAVADGIEVGMMVEIPAAAVMADQFAKEVDFFSIGTNDLIQYTMAADRMNERVAYLYQPYNPAILRLISHVIDAAHREGKWVGMCGEMAGDPIAIPILLALGLDEFSMSATSILPARAQLKQLAKEEAARIKETVLSLGTAEEVVSFVKRTFSLA.

His195 functions as the Tele-phosphohistidine intermediate in the catalytic mechanism. Phosphoenolpyruvate-binding residues include Arg302 and Arg338. The Mg(2+) site is built by Glu437 and Asp461. Phosphoenolpyruvate is bound by residues Asn460–Asp461 and Arg471. The active-site Proton donor is Cys508.

It belongs to the PEP-utilizing enzyme family. In terms of assembly, homodimer. Mg(2+) is required as a cofactor.

It is found in the cytoplasm. It carries out the reaction L-histidyl-[protein] + phosphoenolpyruvate = N(pros)-phospho-L-histidyl-[protein] + pyruvate. Functionally, general (non sugar-specific) component of the phosphoenolpyruvate-dependent sugar phosphotransferase system (sugar PTS). This major carbohydrate active-transport system catalyzes the phosphorylation of incoming sugar substrates concomitantly with their translocation across the cell membrane. Enzyme I transfers the phosphoryl group from phosphoenolpyruvate (PEP) to the phosphoryl carrier protein (HPr). In Bacillus sp. (strain S), this protein is Phosphoenolpyruvate-protein phosphotransferase (ptsI).